Reading from the N-terminus, the 274-residue chain is Orotidine 5'-phosphate decarboxylase (274 aa).

Lys95 functions as the Proton donor in the catalytic mechanism.

This sequence belongs to the OMP decarboxylase family. Type 2 subfamily.

The catalysed reaction is orotidine 5'-phosphate + H(+) = UMP + CO2. It participates in pyrimidine metabolism; UMP biosynthesis via de novo pathway; UMP from orotate: step 2/2. The sequence is that of Orotidine 5'-phosphate decarboxylase from Paracidovorax citrulli (strain AAC00-1) (Acidovorax citrulli).